A 99-amino-acid chain; its full sequence is MRVFTAILLILLVLLQYRLWFGKNSVPDYLVLKENVVRQQSANEKLQQRNKLLFADTDDLKLGLEAIEERARNELGMIKENETFFRLIPKENSTRNVNN.

The Cytoplasmic segment spans residues 1–3 (MRV). Residues 4–21 (FTAILLILLVLLQYRLWF) traverse the membrane as a helical segment. Over 22 to 99 (GKNSVPDYLV…KENSTRNVNN (78 aa)) the chain is Periplasmic. Residues 29–53 (YLVLKENVVRQQSANEKLQQRNKLL) adopt a coiled-coil conformation.

Belongs to the FtsB family. Part of a complex composed of FtsB, FtsL and FtsQ.

Its subcellular location is the cell inner membrane. Its function is as follows. Essential cell division protein. May link together the upstream cell division proteins, which are predominantly cytoplasmic, with the downstream cell division proteins, which are predominantly periplasmic. This is Cell division protein FtsB from Colwellia psychrerythraea (strain 34H / ATCC BAA-681) (Vibrio psychroerythus).